A 695-amino-acid chain; its full sequence is Probable glutamine--tRNA ligase (695 aa).

Positions 201–211 match the 'HIGH' region motif; sequence PEPNGILHIGH. ATP contacts are provided by residues 202 to 204 and 208 to 214; these read EPN and HIGHAKA. Asp-234 and Tyr-391 together coordinate L-glutamine. Residues Thr-410, 439-440, and 447-449 contribute to the ATP site; these read RL and LSK. A 'KMSKS' region motif is present at residues 446–450; that stretch reads VLSKR.

This sequence belongs to the class-I aminoacyl-tRNA synthetase family.

It carries out the reaction tRNA(Gln) + L-glutamine + ATP = L-glutaminyl-tRNA(Gln) + AMP + diphosphate. This Vairimorpha ceranae (strain BRL01) (Microsporidian parasite) protein is Probable glutamine--tRNA ligase.